Reading from the N-terminus, the 154-residue chain is Small ribosomal subunit protein bS16 (154 aa).

A disordered region spans residues valine 82–alanine 154. Basic and acidic residues predominate over residues lysine 92 to alanine 109. Low complexity predominate over residues lysine 110–proline 129. Over residues proline 142–alanine 154 the composition is skewed to acidic residues.

It belongs to the bacterial ribosomal protein bS16 family.

The polypeptide is Small ribosomal subunit protein bS16 (Rhizorhabdus wittichii (strain DSM 6014 / CCUG 31198 / JCM 15750 / NBRC 105917 / EY 4224 / RW1) (Sphingomonas wittichii)).